The sequence spans 1220 residues: Protein patched homolog 1 (1220 aa).

The segment at 1 to 27 (MASDPRDPGPAGGVFGDLPPSYTRSPP) is disordered. Residues 1–84 (MASDPRDPGP…GCHIQRHCGK (84 aa)) are Cytoplasmic-facing. A helical transmembrane segment spans residues 85-105 (VLFIGLLVFGALSVGLRVAAI). The Extracellular portion of the chain corresponds to 106–419 (ETDIEKLWVE…LNDIMKSFSD (314 aa)). N-linked (GlcNAc...) asparagine glycosylation is present at N397. Residues 420-440 (VSVIRVAGGYLLMLAYACVTM) traverse the membrane as a helical segment. Residues 421–579 (SVIRVAGGYL…LLIFPAILSL (159 aa)) form the SSD domain. Over 441–449 (LRWDCAKSQ) the chain is Cytoplasmic. The chain crosses the membrane as a helical span at residues 450-470 (GAVGLAGVLLVALSVAAGLGL). Over 471–484 (CSLLGLSFNAATTQ) the chain is Extracellular. The helical transmembrane segment at 485–505 (VLPSLALGIGVDDMFLLGHSF) threads the bilayer. The Cytoplasmic segment spans residues 506 to 528 (TETRSNIPFKERTGDCLRRTGTS). A helical transmembrane segment spans residues 529-549 (VALTSVNNMIAFFMAALVPIP). Residues 550–558 (ALRAFSLQA) lie on the Extracellular side of the membrane. Residues 559 to 579 (AVVVVFNFAMALLIFPAILSL) traverse the membrane as a helical segment. The Cytoplasmic portion of the chain corresponds to 580–739 (DLHRREDKRL…APLLLKPETK (160 aa)). Residues 740-760 (TVVVVVFVALLSLSLYGTTMV) form a helical membrane-spanning segment. At 761–1016 (HDGLYLTDIV…WEQYIGLRHW (256 aa)) the chain is on the extracellular side. N-linked (GlcNAc...) asparagine glycosylation is found at N865 and N888. The chain crosses the membrane as a helical span at residues 1017–1037 (FLLSISVVLACTFLVCAILLL). Residues 1038–1044 (NPWTAGV) are Cytoplasmic-facing. Residues 1045-1065 (IVFILPMMTVELFGIMGLIGI) form a helical membrane-spanning segment. At 1066–1072 (KLSAIPV) the chain is on the extracellular side. A helical membrane pass occupies residues 1073-1093 (VILIASVGIGVEFTVHIALGF). Residues 1094-1110 (LTAIGDRNTRSAVAMEH) are Cytoplasmic-facing. Residues 1111–1131 (MFAPVIDGAISTLLGVLMLAG) form a helical membrane-spanning segment. Residues 1132-1143 (SEFDFIMRYFFA) lie on the Extracellular side of the membrane. Residues 1144–1164 (VLAILTLLGILNGLVLLPVLL) traverse the membrane as a helical segment. At 1165–1220 (SLMGPPAEVVPANNANHLQSPSPEPMPPPMNHHGYYAGHIPKASHQAFSETSDSEY) the chain is on the cytoplasmic side.

This sequence belongs to the patched family. Glycosylation is necessary for SHH binding. Detected in embryonic presomitic mesoderm, neuroectoderm, tissue surrounding the notochord, ventral neural tube.

The protein localises to the membrane. Functionally, acts as a receptor for sonic hedgehog (SHH), indian hedgehog (IHH) and desert hedgehog (DHH). Associates with the smoothened protein (SMO) to transduce the hedgehog's proteins signal. This Danio rerio (Zebrafish) protein is Protein patched homolog 1 (ptch1).